A 71-amino-acid chain; its full sequence is Protein KleB (71 aa).

Positions 9–28 (VTTNCRRCGKSISTLSRSLI) form a DNA-binding region, H-T-H motif.

The sequence is that of Protein KleB (kleB) from Escherichia coli.